The sequence spans 275 residues: Elongation factor Ts (275 aa).

Positions 76–79 are involved in Mg(2+) ion dislocation from EF-Tu; that stretch reads TDFV.

It belongs to the EF-Ts family.

The protein localises to the cytoplasm. Its function is as follows. Associates with the EF-Tu.GDP complex and induces the exchange of GDP to GTP. It remains bound to the aminoacyl-tRNA.EF-Tu.GTP complex up to the GTP hydrolysis stage on the ribosome. The sequence is that of Elongation factor Ts from Rhodococcus opacus (strain B4).